The sequence spans 431 residues: L-ornithine N(5)-monooxygenase (431 aa).

Residues 40 to 48 and Gln-59 contribute to the FAD site; that span reads EKLPTFSWH. Lys-64 lines the substrate pocket. NADP(+) contacts are provided by residues 202–205 and Arg-228; that span reads CGQS. Residues 242–245 and Asn-273 each bind substrate; that span reads NSLY. Residue 273-275 coordinates NADP(+); that stretch reads NYS. 399–401 contributes to the FAD binding site; it reads TLL. Ser-402 serves as a coordination point for substrate.

The protein belongs to the lysine N(6)-hydroxylase/L-ornithine N(5)-oxygenase family. FAD serves as cofactor.

It localises to the cytoplasm. Its subcellular location is the nucleus. It catalyses the reaction L-ornithine + NADPH + O2 = N(5)-hydroxy-L-ornithine + NADP(+) + H2O. The catalysed reaction is L-ornithine + NADH + O2 = N(5)-hydroxy-L-ornithine + NAD(+) + H2O. It functions in the pathway siderophore biosynthesis; ferrichrome biosynthesis. Functionally, catalyzes the conversion of L-ornithine to N(5)-hydroxyornithine, the first step in the biosynthesis of all hydroxamate-containing siderophores, such as ferrichrome. The polypeptide is L-ornithine N(5)-monooxygenase (Schizosaccharomyces pombe (strain 972 / ATCC 24843) (Fission yeast)).